The primary structure comprises 243 residues: tRNA1(Val) (adenine(37)-N6)-methyltransferase (243 aa).

This sequence belongs to the methyltransferase superfamily. tRNA (adenine-N(6)-)-methyltransferase family.

Its subcellular location is the cytoplasm. The catalysed reaction is adenosine(37) in tRNA1(Val) + S-adenosyl-L-methionine = N(6)-methyladenosine(37) in tRNA1(Val) + S-adenosyl-L-homocysteine + H(+). In terms of biological role, specifically methylates the adenine in position 37 of tRNA(1)(Val) (anticodon cmo5UAC). In Shewanella woodyi (strain ATCC 51908 / MS32), this protein is tRNA1(Val) (adenine(37)-N6)-methyltransferase.